Reading from the N-terminus, the 241-residue chain is Large ribosomal subunit protein uL13c (241 aa).

The N-terminal 50 residues, 1–50, are a transit peptide targeting the chloroplast; that stretch reads MAVLCSSSTVILSSSSVKSSGSERKSPFLGFSLTAISKPSVRVGIYANSK.

It belongs to the universal ribosomal protein uL13 family. As to quaternary structure, part of the 50S ribosomal subunit.

The protein localises to the plastid. The protein resides in the chloroplast. The protein is Large ribosomal subunit protein uL13c (RPL13) of Arabidopsis thaliana (Mouse-ear cress).